The primary structure comprises 639 residues: MKVVDPDIGTGGSTVITASETRTLRVSTAPHLAPGADPTMIRNFCIIAHIDHGKSTLADRMLGVTGVVEARNMRAQYLDRMDIERERGITIKAQNVRLPWRADDGRDYILHLIDTPGHVDFSYEVSRSLAACEGAVLLVDAAQGIEAQTLANLYLAIENDLTIVPVLNKIDLPAAQPEKYAEEIAAIIGCEPGEVLRVSGKTGQGVPELLNEIVRRVPAPVGDPDGPARAMIFDSVYDIYRGVITYVRVVDGTLTTRDRCLMMSTSASHETLEVGVISPDPHPTGSLSVGEVGYVIPGVKDVRQARVGDTITTTRRPATEMLGGYRDPLPMVYSGLYPIDGSEYPALREALDKLQLNDAALTYEPETSAALGFGFRCGFLGLLHLEIVRERLEREFNLTLISTAPNVVYRVVMEDHSEIIVTNPSDWPGGKIAEVYEPVVEAMLLLPTDFVGAVMELCQGRRGVLKGMDYLSTDRVELKYTLPLGEIIFDFFDALKSRTRGYASLDYEPAGEQLADLVKVDILLQGETVDAFSAIVHREKAYAYGVSMTTKLRELIPRQQFEVPIQAAIGSRIIARENIRAIRKDVLAKCYGGDITRKRKLLEKQKEGKKRMKTIGRVEVPQEAFIAALSTDTGKPAVK.

The tr-type G domain occupies 39-221; that stretch reads TMIRNFCIIA…EIVRRVPAPV (183 aa). Residues 51–56 and 168–171 contribute to the GTP site; these read DHGKST and NKID.

The protein belongs to the TRAFAC class translation factor GTPase superfamily. Classic translation factor GTPase family. LepA subfamily.

It localises to the cell membrane. The catalysed reaction is GTP + H2O = GDP + phosphate + H(+). Its function is as follows. Required for accurate and efficient protein synthesis under certain stress conditions. May act as a fidelity factor of the translation reaction, by catalyzing a one-codon backward translocation of tRNAs on improperly translocated ribosomes. Back-translocation proceeds from a post-translocation (POST) complex to a pre-translocation (PRE) complex, thus giving elongation factor G a second chance to translocate the tRNAs correctly. Binds to ribosomes in a GTP-dependent manner. This Frankia casuarinae (strain DSM 45818 / CECT 9043 / HFP020203 / CcI3) protein is Elongation factor 4.